A 316-amino-acid polypeptide reads, in one-letter code: Ribosomal RNA small subunit methyltransferase H (316 aa).

S-adenosyl-L-methionine-binding positions include 35 to 37 (SGH), D55, F84, D105, and Q112.

It belongs to the methyltransferase superfamily. RsmH family.

Its subcellular location is the cytoplasm. The enzyme catalyses cytidine(1402) in 16S rRNA + S-adenosyl-L-methionine = N(4)-methylcytidine(1402) in 16S rRNA + S-adenosyl-L-homocysteine + H(+). Functionally, specifically methylates the N4 position of cytidine in position 1402 (C1402) of 16S rRNA. The sequence is that of Ribosomal RNA small subunit methyltransferase H from Streptococcus pyogenes serotype M6 (strain ATCC BAA-946 / MGAS10394).